We begin with the raw amino-acid sequence, 283 residues long: ATP phosphoribosyltransferase (283 aa).

Belongs to the ATP phosphoribosyltransferase family. Long subfamily. In terms of assembly, equilibrium between an active dimeric form, an inactive hexameric form and higher aggregates. Interconversion between the various forms is largely reversible and is influenced by the natural substrates and inhibitors of the enzyme. Mg(2+) is required as a cofactor.

Its subcellular location is the cytoplasm. The enzyme catalyses 1-(5-phospho-beta-D-ribosyl)-ATP + diphosphate = 5-phospho-alpha-D-ribose 1-diphosphate + ATP. It participates in amino-acid biosynthesis; L-histidine biosynthesis; L-histidine from 5-phospho-alpha-D-ribose 1-diphosphate: step 1/9. With respect to regulation, feedback inhibited by histidine. In terms of biological role, catalyzes the condensation of ATP and 5-phosphoribose 1-diphosphate to form N'-(5'-phosphoribosyl)-ATP (PR-ATP). Has a crucial role in the pathway because the rate of histidine biosynthesis seems to be controlled primarily by regulation of HisG enzymatic activity. The sequence is that of ATP phosphoribosyltransferase from Mycobacterium sp. (strain KMS).